The following is a 358-amino-acid chain: Methionine import ATP-binding protein MetN (358 aa).

In terms of domain architecture, ABC transporter spans 2–247 (ITTTGLTKVY…PGSELAHELF (246 aa)). ATP is bound at residue 38-45 (GQSGAGKS).

Belongs to the ABC transporter superfamily. Methionine importer (TC 3.A.1.24) family. In terms of assembly, the complex is composed of two ATP-binding proteins (MetN), two transmembrane proteins (MetI) and a solute-binding protein (MetQ).

The protein resides in the cell membrane. The catalysed reaction is L-methionine(out) + ATP + H2O = L-methionine(in) + ADP + phosphate + H(+). It carries out the reaction D-methionine(out) + ATP + H2O = D-methionine(in) + ADP + phosphate + H(+). Its function is as follows. Part of the ABC transporter complex MetNIQ involved in methionine import. Responsible for energy coupling to the transport system. The polypeptide is Methionine import ATP-binding protein MetN (Streptomyces griseus).